The chain runs to 61 residues: Small ribosomal subunit protein uS14 (61 aa).

Residues Cys-24, Cys-27, Cys-40, and Cys-43 each contribute to the Zn(2+) site.

This sequence belongs to the universal ribosomal protein uS14 family. Zinc-binding uS14 subfamily. In terms of assembly, part of the 30S ribosomal subunit. Contacts proteins S3 and S10. The cofactor is Zn(2+).

In terms of biological role, binds 16S rRNA, required for the assembly of 30S particles and may also be responsible for determining the conformation of the 16S rRNA at the A site. The protein is Small ribosomal subunit protein uS14 of Syntrophobacter fumaroxidans (strain DSM 10017 / MPOB).